We begin with the raw amino-acid sequence, 356 residues long: Heat-inducible transcription repressor HrcA (356 aa).

The protein belongs to the HrcA family.

In terms of biological role, negative regulator of class I heat shock genes (grpE-dnaK-dnaJ and groELS operons). Prevents heat-shock induction of these operons. This chain is Heat-inducible transcription repressor HrcA, found in Bartonella henselae (strain ATCC 49882 / DSM 28221 / CCUG 30454 / Houston 1) (Rochalimaea henselae).